Consider the following 395-residue polypeptide: Ketoisovalerate oxidoreductase subunit VorA (395 aa).

As to quaternary structure, heterotetramer of one alpha, one beta, one delta and one gamma chain.

It carries out the reaction 3-methyl-2-oxobutanoate + 2 oxidized [2Fe-2S]-[ferredoxin] + CoA = 2-methylpropanoyl-CoA + 2 reduced [2Fe-2S]-[ferredoxin] + CO2 + H(+). The sequence is that of Ketoisovalerate oxidoreductase subunit VorA (vorA) from Pyrococcus abyssi (strain GE5 / Orsay).